A 614-amino-acid chain; its full sequence is DNA double-strand break repair protein Mre11 (614 aa).

Mn(2+) is bound by residues Asp12, His14, Asp53, and Asn88. Residue His89 is the Proton donor of the active site. Residues His158, Asp189, and His191 each coordinate Mn(2+). Disordered regions lie at residues 393–434 and 487–614; these read ASPI…SPDI and ALKK…GDYL. A compositionally biased stretch (low complexity) spans 411–425; that stretch reads PVSSADSVSAVSPES. Composition is skewed to basic and acidic residues over residues 487–502, 535–558, and 568–591; these read ALKK…REAP, VPEK…KETG, and GSEK…EKPV.

Belongs to the MRE11/RAD32 family. In terms of assembly, homodimer. Forms a heterotetramer composed of two Mre11 subunits and two Rad50 subunits. Mn(2+) serves as cofactor.

With respect to regulation, nuclease activity is regulated by Rad50. Part of the Rad50/Mre11 complex, which is involved in the early steps of DNA double-strand break (DSB) repair. The complex may facilitate opening of the processed DNA ends to aid in the recruitment of HerA and NurA. Mre11 binds to DSB ends and has both double-stranded 3'-5' exonuclease activity and single-stranded endonuclease activity. The protein is DNA double-strand break repair protein Mre11 of Methanosarcina acetivorans (strain ATCC 35395 / DSM 2834 / JCM 12185 / C2A).